The chain runs to 142 residues: Large ribosomal subunit protein uL13 (142 aa).

This sequence belongs to the universal ribosomal protein uL13 family. As to quaternary structure, part of the 50S ribosomal subunit.

In terms of biological role, this protein is one of the early assembly proteins of the 50S ribosomal subunit, although it is not seen to bind rRNA by itself. It is important during the early stages of 50S assembly. This Vibrio vulnificus (strain CMCP6) protein is Large ribosomal subunit protein uL13.